The sequence spans 149 residues: Arginine repressor (149 aa).

The protein belongs to the ArgR family.

The protein localises to the cytoplasm. It functions in the pathway amino-acid biosynthesis; L-arginine biosynthesis [regulation]. Regulates arginine biosynthesis genes. This Oceanobacillus iheyensis (strain DSM 14371 / CIP 107618 / JCM 11309 / KCTC 3954 / HTE831) protein is Arginine repressor.